The chain runs to 380 residues: Cytochrome b (380 aa).

A run of 4 helical transmembrane segments spans residues 33–53 (FGSLLGLCLAIQLLTGLFLAM), 77–98 (WLIRNMHANGASFFFICIYLHI), 113–133 (WNVGVVLLLLVMMTAFVGYVL), and 178–198 (FFAFHFLLPFVIAAATLLHLL). Positions 83 and 97 each coordinate heme b. The heme b site is built by H182 and H196. H201 lines the a ubiquinone pocket. 4 consecutive transmembrane segments (helical) span residues 226 to 246 (YKDLLGFIVLFLALASLALFS), 288 to 308 (LGGVLALLASILILMLVPILH), 320 to 340 (FSQIIFWTLVADVAILTWIGG), and 347 to 367 (YIIIGQIASALYFLIFLVFFP).

This sequence belongs to the cytochrome b family. In terms of assembly, the cytochrome bc1 complex contains 3 respiratory subunits (MT-CYB, CYC1 and UQCRFS1), 2 core proteins (UQCRC1 and UQCRC2) and probably 6 low-molecular weight proteins. Heme b is required as a cofactor.

Its subcellular location is the mitochondrion inner membrane. Its function is as follows. Component of the ubiquinol-cytochrome c reductase complex (complex III or cytochrome b-c1 complex) that is part of the mitochondrial respiratory chain. The b-c1 complex mediates electron transfer from ubiquinol to cytochrome c. Contributes to the generation of a proton gradient across the mitochondrial membrane that is then used for ATP synthesis. The polypeptide is Cytochrome b (mt-cyb) (Apogon semilineatus (Half-lined cardinal)).